A 485-amino-acid chain; its full sequence is Catalase isozyme 1 (485 aa).

Active-site residues include His58 and Asn131. Tyr341 lines the heme pocket.

The protein belongs to the catalase family. Homotetramer. Requires heme as cofactor.

Its subcellular location is the peroxisome. It catalyses the reaction 2 H2O2 = O2 + 2 H2O. In terms of biological role, occurs in almost all aerobically respiring organisms and serves to protect cells from the toxic effects of hydrogen peroxide. The chain is Catalase isozyme 1 (CAT1) from Nicotiana plumbaginifolia (Leadwort-leaved tobacco).